A 119-amino-acid polypeptide reads, in one-letter code: Large ribosomal subunit protein uL18 (119 aa).

The disordered stretch occupies residues 1–23 (MSQVDKAARRQKIKDRSRVSVQG).

The protein belongs to the universal ribosomal protein uL18 family. In terms of assembly, part of the 50S ribosomal subunit; part of the 5S rRNA/L5/L18/L25 subcomplex. Contacts the 5S and 23S rRNAs.

In terms of biological role, this is one of the proteins that bind and probably mediate the attachment of the 5S RNA into the large ribosomal subunit, where it forms part of the central protuberance. The protein is Large ribosomal subunit protein uL18 of Chlorobium chlorochromatii (strain CaD3).